A 119-amino-acid chain; its full sequence is Protein phosphatase EYA4 (119 aa).

This sequence belongs to the HAD-like hydrolase superfamily. EYA family. Mg(2+) is required as a cofactor.

The protein resides in the cytoplasm. The protein localises to the nucleus. The enzyme catalyses O-phospho-L-tyrosyl-[protein] + H2O = L-tyrosyl-[protein] + phosphate. Tyrosine phosphatase that specifically dephosphorylates 'Tyr-142' of histone H2AX (H2AXY142ph). 'Tyr-142' phosphorylation of histone H2AX plays a central role in DNA repair and acts as a mark that distinguishes between apoptotic and repair responses to genotoxic stress. Promotes efficient DNA repair by dephosphorylating H2AX, promoting the recruitment of DNA repair complexes containing MDC1. Its function as histone phosphatase probably explains its role in transcription regulation during organogenesis. May be involved in development of the eye. This chain is Protein phosphatase EYA4 (eya4), found in Takifugu rubripes (Japanese pufferfish).